Reading from the N-terminus, the 277-residue chain is MRQTAQEDASPAPMQRAHGTGRIEAKLREGRTRLERLYQEGCCKIRLPRSHGGAMEAVLINTSGGLTGGDRIDWKADALAGSKLVVTTQACERIYRSTGDDARVSTALRVGPGAHVDWLPQETILFEGSRLHRSLRVDLEDNATFTAVEAVLLGREAMGETARKAHLRDRWRIYRDGKLVHAEETRLAGEEFEREGISLLAGNNAFATILAIGPDAEEKLTALRSILGPSVHAAASAIGERLVLRVVAPSGLMLRRTIIPAIALLSGAGALPRLWSI.

The segment at 1 to 20 (MRQTAQEDASPAPMQRAHGT) is disordered.

This sequence belongs to the UreD family. In terms of assembly, ureD, UreF and UreG form a complex that acts as a GTP-hydrolysis-dependent molecular chaperone, activating the urease apoprotein by helping to assemble the nickel containing metallocenter of UreC. The UreE protein probably delivers the nickel.

Its subcellular location is the cytoplasm. In terms of biological role, required for maturation of urease via the functional incorporation of the urease nickel metallocenter. The polypeptide is Urease accessory protein UreD (Chelativorans sp. (strain BNC1)).